A 339-amino-acid polypeptide reads, in one-letter code: Ribosome biogenesis protein BRX1 homolog (339 aa).

The tract at residues 1–34 (MSAYKRKRGSLPEVATNTKKAKKQLAGSEQEATA) is disordered. A Brix domain is found at 53-242 (ERVLIFSSRG…LIKIFKGSFG (190 aa)). A disordered region spans residues 304-339 (AEEKPQVIETEPPAPKPKMKRKDKQFKRQRMAKKRM). The span at 320–339 (PKMKRKDKQFKRQRMAKKRM) shows a compositional bias: basic residues.

The protein belongs to the BRX1 family. Ubiquitous.

The protein resides in the nucleus. The protein localises to the nucleolus. Functionally, required for biogenesis of the 60S ribosomal subunit. This chain is Ribosome biogenesis protein BRX1 homolog (brix1), found in Xenopus laevis (African clawed frog).